The primary structure comprises 155 residues: Cytochrome c-type biogenesis protein CcmE (155 aa).

The Cytoplasmic segment spans residues 1 to 8 (MNPLRKKR). A helical; Signal-anchor for type II membrane protein membrane pass occupies residues 9-29 (LLIIAALLAGVGLAMTLALGA). Residues 30–155 (LKENINLFYT…GGSSTPAKQG (126 aa)) lie on the Periplasmic side of the membrane. Residues His-124 and Tyr-128 each coordinate heme. The disordered stretch occupies residues 134–155 (TKALRDSGQAAPGGSSTPAKQG).

It belongs to the CcmE/CycJ family.

It is found in the cell inner membrane. Functionally, heme chaperone required for the biogenesis of c-type cytochromes. Transiently binds heme delivered by CcmC and transfers the heme to apo-cytochromes in a process facilitated by CcmF and CcmH. The polypeptide is Cytochrome c-type biogenesis protein CcmE (Pseudomonas savastanoi pv. phaseolicola (strain 1448A / Race 6) (Pseudomonas syringae pv. phaseolicola (strain 1448A / Race 6))).